A 260-amino-acid chain; its full sequence is Dehydrogenase/reductase SDR family member 11 (260 aa).

Positions methionine 1–alanine 30 are cleaved as a signal peptide. NADP(+)-binding positions include glycine 18–isoleucine 23, arginine 43–threonine 44, glutamate 49, aspartate 70–leucine 71, and asparagine 97. Substrate is bound by residues serine 151 and tyrosine 166. NADP(+)-binding positions include tyrosine 166, lysine 170, valine 201–glutamine 204, and lysine 208. Catalysis depends on tyrosine 166, which acts as the Proton acceptor.

The protein belongs to the short-chain dehydrogenases/reductases (SDR) family. Homotetramer.

Its subcellular location is the secreted. The catalysed reaction is a 3beta-hydroxysteroid + NADP(+) = a 3-oxosteroid + NADPH + H(+). The enzyme catalyses 17beta-estradiol + NAD(+) = estrone + NADH + H(+). It carries out the reaction 17beta-estradiol + NADP(+) = estrone + NADPH + H(+). It participates in steroid biosynthesis; estrogen biosynthesis. Inhibited by flavonoids including apigenin, luteolin, genistein, kaempferol and quercetin and also by carbenoxolone, zearalenone, glycyrrhetinic, curcumin and flufenamic acid. Its function is as follows. Catalyzes the conversion of the 17-keto group of estrone, 4- and 5-androstenes and 5-alpha-androstanes into their 17-beta-hydroxyl metabolites and the conversion of the 3-keto group of 3-, 3,17- and 3,20- diketosteroids into their 3-hydroxyl metabolites. Exhibits reductive 3-beta-hydroxysteroid dehydrogenase activity toward 5-beta-androstanes, 5-beta-pregnanes, 4-pregnenes and bile acids. May also reduce endogenous and exogenous alpha-dicarbonyl compounds and xenobiotic alicyclic ketones. The sequence is that of Dehydrogenase/reductase SDR family member 11 (Dhrs11) from Mus musculus (Mouse).